Reading from the N-terminus, the 908-residue chain is Metabotropic glutamate receptor 8 (908 aa).

An N-terminal signal peptide occupies residues 1 to 33 (MVCEGKRLASCPCFFLLTAKFYWILTMMQRTHS). Topologically, residues 34 to 583 (QEYAHSIRVD…IIKLEWHSPW (550 aa)) are extracellular. An intrachain disulfide couples Cys64 to Cys106. Asn95 carries N-linked (GlcNAc...) asparagine glycosylation. L-glutamate is bound by residues Ser156, 177–179 (AST), and Tyr227. Disulfide bonds link Cys246-Cys534, Cys369-Cys384, Cys424-Cys431, Cys516-Cys535, Cys520-Cys538, Cys541-Cys553, and Cys556-Cys569. A glycan (N-linked (GlcNAc...) asparagine) is linked at Asn298. Asp309 contributes to the L-glutamate binding site. Lys401 is a binding site for L-glutamate. N-linked (GlcNAc...) asparagine glycosylation is found at Asn452 and Asn480. Asn565 carries N-linked (GlcNAc...) asparagine glycosylation. Residues 584 to 608 (AVVPVFIAILGIIATTFVIVTFVRY) form a helical membrane-spanning segment. Residues 609 to 620 (NDTPIVRASGRE) lie on the Cytoplasmic side of the membrane. A helical transmembrane segment spans residues 621–641 (LSYVLLTGIFLCYSITFLMIA). Over 642–647 (APDTII) the chain is Extracellular. Residues 648 to 668 (CSFRRIFLGLGMCFSYAALLT) traverse the membrane as a helical segment. Residues 669–695 (KTNRIHRIFEQGKKSVTAPKFISPASQ) are Cytoplasmic-facing. The helical transmembrane segment at 696 to 716 (LVITFSLISVQLLGVFVWFVV) threads the bilayer. The Extracellular segment spans residues 717-746 (DPPHTIIDYGEQRTLDPENARGVLKCDISD). The helical transmembrane segment at 747 to 768 (LSLICSLGYSILLMVTCTVYAI) threads the bilayer. The Cytoplasmic portion of the chain corresponds to 769 to 781 (KTRGVPETFNEAK). Residues 782-803 (PIGFTMYTTCIIWLAFIPIFFG) form a helical membrane-spanning segment. Residues 804–818 (TAQSAEKMYIQTTTL) are Extracellular-facing. Residues 819–843 (TVSMSLSASVSLGMLYMPKVYIIIF) form a helical membrane-spanning segment. Residues 844–908 (HPEQNVQKRK…TYISYSNHSI (65 aa)) are Cytoplasmic-facing. Lys882 is covalently cross-linked (Glycyl lysine isopeptide (Lys-Gly) (interchain with G-Cter in SUMO1)).

The protein belongs to the G-protein coupled receptor 3 family. Interacts with PICK1. Prominent expression in olfactory bulb, pontine gray, lateral reticular nucleus of the thalamus, and piriform cortex. Less abundant expression incerebral cortex, hippocampus, cerebellum, and mammillary body.

It localises to the cell membrane. In terms of biological role, G-protein coupled receptor for glutamate. Ligand binding causes a conformation change that triggers signaling via guanine nucleotide-binding proteins (G proteins) and modulates the activity of down-stream effectors. Signaling inhibits adenylate cyclase activity. The polypeptide is Metabotropic glutamate receptor 8 (Grm8) (Rattus norvegicus (Rat)).